A 51-amino-acid chain; its full sequence is Insulin (51 aa).

Cystine bridges form between C8–C37, C20–C50, and C36–C41.

Belongs to the insulin family. Heterodimer of a B chain and an A chain linked by two disulfide bonds.

The protein resides in the secreted. In terms of biological role, insulin decreases blood glucose concentration. It increases cell permeability to monosaccharides, amino acids and fatty acids. It accelerates glycolysis, the pentose phosphate cycle, and glycogen synthesis in liver. The chain is Insulin (ins) from Gadus morhua subsp. callarias (Baltic cod).